Here is a 122-residue protein sequence, read N- to C-terminus: Large ribosomal subunit protein uL14 (122 aa).

The protein belongs to the universal ribosomal protein uL14 family. As to quaternary structure, part of the 50S ribosomal subunit. Forms a cluster with proteins L3 and L19. In the 70S ribosome, L14 and L19 interact and together make contacts with the 16S rRNA in bridges B5 and B8.

Binds to 23S rRNA. Forms part of two intersubunit bridges in the 70S ribosome. The protein is Large ribosomal subunit protein uL14 of Chlorobium phaeobacteroides (strain DSM 266 / SMG 266 / 2430).